A 518-amino-acid polypeptide reads, in one-letter code: Ribonuclease Y (518 aa).

A helical transmembrane segment spans residues 2 to 22 (GSIIISALLALVIGAVVGFFV). One can recognise a KH domain in the interval 208–271 (TVSVVNLPND…ETARIALDKL (64 aa)). Positions 334-427 (VLKHSVEVAF…VAAADALSAA (94 aa)) constitute an HD domain.

This sequence belongs to the RNase Y family.

The protein localises to the cell membrane. Endoribonuclease that initiates mRNA decay. This chain is Ribonuclease Y, found in Geobacillus kaustophilus (strain HTA426).